A 115-amino-acid polypeptide reads, in one-letter code: uncharacterized protein (115 aa).

This is an uncharacterized protein from Dictyostelium discoideum (Social amoeba).